A 6269-amino-acid polypeptide reads, in one-letter code: Nonribosomal peptide synthetase 1 (6269 aa).

Residues Glu-249 to Ile-781 form an adenylation 1 region. The region spanning Arg-803–Thr-879 is the Carrier 1 domain. Ser-840 carries the O-(pantetheine 4'-phosphoryl)serine modification. The epimerase 1 stretch occupies residues Leu-894–Leu-1342. The condensation 1 stretch occupies residues Ser-1373–His-1775. The tract at residues His-1725–Arg-2333 is adenylation 2. Residues Lys-2364–Thr-2386 are disordered. A compositionally biased stretch (low complexity) spans Pro-2367–Ser-2376. Residues Ala-2377–Thr-2386 show a composition bias toward polar residues. The segment at Trp-2597–Tyr-2670 is condensation 2. Positions Arg-2845–Arg-3368 are adenylation 3. A Carrier 2 domain is found at Ala-3392–Gln-3468. At Ser-3429 the chain carries O-(pantetheine 4'-phosphoryl)serine. The condensation 3 stretch occupies residues Cys-3512 to Leu-3898. The interval Asp-3919–Ile-4454 is adenylation 4. Positions Glu-4487–Thr-4563 constitute a Carrier 3 domain. The residue at position 4524 (Ser-4524) is an O-(pantetheine 4'-phosphoryl)serine. Residues Leu-4578–Asp-5024 are epimerase 2. The interval Ser-5052 to Leu-5466 is condensation 4. The 77-residue stretch at Ser-5552–Asn-5628 folds into the Carrier 4 domain. At Ser-5589 the chain carries O-(pantetheine 4'-phosphoryl)serine. Residues Asn-5628–Asn-5658 are disordered. Over residues Asn-5642–Arg-5657 the composition is skewed to basic and acidic residues. The condensation 5 stretch occupies residues Phe-5720–Ser-6067. One can recognise a Carrier 5 domain in the interval Ser-6139–Asn-6220.

Belongs to the NRP synthetase family. The thiolation domains are 4'-phosphopantetheinylated.

In terms of biological role, nonribosomal peptide synthesis (NRPS) is a key mechanism responsible for the biosynthesis of bioactive metabolites which are potentially contributing to organismal virulence. Contributes to improved fungal tolerance against oxidative stress, during the infection process. This Aspergillus fumigatus (strain ATCC MYA-4609 / CBS 101355 / FGSC A1100 / Af293) (Neosartorya fumigata) protein is Nonribosomal peptide synthetase 1 (NRPS1).